A 433-amino-acid polypeptide reads, in one-letter code: Ribosomal RNA small subunit methyltransferase B (433 aa).

S-adenosyl-L-methionine contacts are provided by residues 254 to 260 (CAAPGGK), Asp-277, Asp-303, and Asp-322. Cys-375 acts as the Nucleophile in catalysis.

This sequence belongs to the class I-like SAM-binding methyltransferase superfamily. RsmB/NOP family.

Its subcellular location is the cytoplasm. The catalysed reaction is cytidine(967) in 16S rRNA + S-adenosyl-L-methionine = 5-methylcytidine(967) in 16S rRNA + S-adenosyl-L-homocysteine + H(+). Functionally, specifically methylates the cytosine at position 967 (m5C967) of 16S rRNA. This Sodalis glossinidius (strain morsitans) protein is Ribosomal RNA small subunit methyltransferase B.